The chain runs to 618 residues: Protease 4 (618 aa).

Over 1–24 the chain is Cytoplasmic; the sequence is MRTLWRFIAGFFKWTWRLLNFVRE. The helical transmembrane segment at 25–45 threads the bilayer; sequence MVLNLFFIFLVLVGVGIWMQV. The Periplasmic segment spans residues 46–618; it reads SGGDSKETAS…AFCLTCANMR (573 aa). Lysine 209 acts as the Proton donor/acceptor in catalysis. The active-site Nucleophile is serine 409.

This sequence belongs to the peptidase S49 family. In terms of assembly, homotetramer.

The protein resides in the cell inner membrane. Inhibited by serine hydrolase inhibitor FP-biotin and by antipain. Functionally, digests cleaved signal peptides in vitro, its in vivo function is unknown. This activity is necessary to maintain proper secretion of mature proteins across the membrane. The sequence is that of Protease 4 (sppA) from Escherichia coli (strain K12).